The chain runs to 511 residues: Cytochrome P450 4B1 (511 aa).

Positions 315 and 453 each coordinate heme.

This sequence belongs to the cytochrome P450 family. The cofactor is heme.

It is found in the endoplasmic reticulum membrane. The protein resides in the microsome membrane. The catalysed reaction is an organic molecule + reduced [NADPH--hemoprotein reductase] + O2 = an alcohol + oxidized [NADPH--hemoprotein reductase] + H2O + H(+). Its function is as follows. Cytochromes P450 are a group of heme-thiolate monooxygenases. In liver microsomes, this enzyme is involved in an NADPH-dependent electron transport pathway. It oxidizes a variety of structurally unrelated compounds, including steroids, fatty acids, and xenobiotics. The protein is Cytochrome P450 4B1 (Cyp4b1) of Rattus norvegicus (Rat).